The primary structure comprises 344 residues: HTH-type transcriptional regulator MalR (344 aa).

The HTH lacI-type domain maps to 1–54; the sequence is MTTRLADIAAQAGVSEATVSRVLNGKPGVAATTRQSVLAALDVLGYERPVRLRQ. Positions 5-24 form a DNA-binding region, H-T-H motif; it reads LADIAAQAGVSEATVSRVLN.

Its function is as follows. Transcriptional repressor of the maltosaccharide utilization operon malEFG. This is HTH-type transcriptional regulator MalR (malR) from Streptomyces coelicolor (strain ATCC BAA-471 / A3(2) / M145).